The sequence spans 432 residues: Phosphomevalonate kinase (432 aa).

ATP contacts are provided by residues lysine 10 and 142–148 (VEKTGLG).

It belongs to the GHMP kinase family. Mevalonate kinase subfamily.

It is found in the cytoplasm. The enzyme catalyses (R)-5-phosphomevalonate + ATP = (R)-5-diphosphomevalonate + ADP. It functions in the pathway isoprenoid biosynthesis; isopentenyl diphosphate biosynthesis via mevalonate pathway; isopentenyl diphosphate from (R)-mevalonate: step 2/3. Its function is as follows. Phosphomevalonate kinase; part of the second module of ergosterol biosynthesis pathway that includes the middle steps of the pathway. ERG8 converts 5-phosphomevalonate to 5-diphosphomevalonate. The second module is carried out in the vacuole and involves the formation of farnesyl diphosphate, which is also an important intermediate in the biosynthesis of ubiquinone, dolichol, heme and prenylated proteins. Activity by the mevalonate kinase ERG12 first converts mevalonate into 5-phosphomevalonate. 5-phosphomevalonate is then further converted to 5-diphosphomevalonate by the phosphomevalonate kinase ERG8. The diphosphomevalonate decarboxylase MVD then produces isopentenyl diphosphate. The isopentenyl-diphosphate delta-isomerase IDI1 then catalyzes the 1,3-allylic rearrangement of the homoallylic substrate isopentenyl (IPP) to its highly electrophilic allylic isomer, dimethylallyl diphosphate (DMAPP). Finally the farnesyl diphosphate synthase ERG20 catalyzes the sequential condensation of isopentenyl pyrophosphate with dimethylallyl pyrophosphate, and then with the resultant geranylpyrophosphate to the ultimate product farnesyl pyrophosphate. The sequence is that of Phosphomevalonate kinase from Candida albicans (strain SC5314 / ATCC MYA-2876) (Yeast).